A 332-amino-acid chain; its full sequence is Aspartate carbamoyltransferase catalytic subunit (332 aa).

The interval 1-20 (MPNTHDTKNNVSPSEYAKFD) is disordered. Arginine 72 and threonine 73 together coordinate carbamoyl phosphate. Residue lysine 100 participates in L-aspartate binding. The carbamoyl phosphate site is built by arginine 122, histidine 152, and glutamine 155. L-aspartate-binding residues include arginine 186 and arginine 241. Positions 282 and 283 each coordinate carbamoyl phosphate.

This sequence belongs to the aspartate/ornithine carbamoyltransferase superfamily. ATCase family. As to quaternary structure, heterododecamer (2C3:3R2) of six catalytic PyrB chains organized as two trimers (C3), and six regulatory PyrI chains organized as three dimers (R2).

It catalyses the reaction carbamoyl phosphate + L-aspartate = N-carbamoyl-L-aspartate + phosphate + H(+). The protein operates within pyrimidine metabolism; UMP biosynthesis via de novo pathway; (S)-dihydroorotate from bicarbonate: step 2/3. Catalyzes the condensation of carbamoyl phosphate and aspartate to form carbamoyl aspartate and inorganic phosphate, the committed step in the de novo pyrimidine nucleotide biosynthesis pathway. The polypeptide is Aspartate carbamoyltransferase catalytic subunit (Psychrobacter sp. (strain TAD1)).